We begin with the raw amino-acid sequence, 338 residues long: 5-dehydro-2-deoxygluconokinase (338 aa).

This sequence belongs to the carbohydrate kinase PfkB family.

It catalyses the reaction 5-dehydro-2-deoxy-D-gluconate + ATP = 6-phospho-5-dehydro-2-deoxy-D-gluconate + ADP + H(+). Its pathway is polyol metabolism; myo-inositol degradation into acetyl-CoA; acetyl-CoA from myo-inositol: step 5/7. Functionally, catalyzes the phosphorylation of 5-dehydro-2-deoxy-D-gluconate (2-deoxy-5-keto-D-gluconate or DKG) to 6-phospho-5-dehydro-2-deoxy-D-gluconate (DKGP). This Mesomycoplasma hyopneumoniae (strain J / ATCC 25934 / NCTC 10110) (Mycoplasma hyopneumoniae) protein is 5-dehydro-2-deoxygluconokinase.